A 137-amino-acid polypeptide reads, in one-letter code: Structural protein A137R (137 aa).

Belongs to the asfivirus A137R family. As to quaternary structure, interacts with host TBK1.

It is found in the virion. The protein resides in the host cytoplasm. Functionally, plays a role in the inhibition of the host innate immune response. Mechanistically, promotes the autophagy-mediated lysosomal degradation of host TBK1 and affects IRF3 nuclear translocation to block type I IFN production. This is Structural protein A137R from Ornithodoros (relapsing fever ticks).